Reading from the N-terminus, the 525-residue chain is GMP synthase [glutamine-hydrolyzing] (525 aa).

In terms of domain architecture, Glutamine amidotransferase type-1 spans 9–207 (RILILDFGSQ…VQDICGCEAL (199 aa)). Cys86 functions as the Nucleophile in the catalytic mechanism. Residues His181 and Glu183 contribute to the active site. The 193-residue stretch at 208–400 (WTASNIVEDA…LGLPYDMVYR (193 aa)) folds into the GMPS ATP-PPase domain. 235–241 (SGGVDSS) provides a ligand contact to ATP.

As to quaternary structure, homodimer.

It carries out the reaction XMP + L-glutamine + ATP + H2O = GMP + L-glutamate + AMP + diphosphate + 2 H(+). The protein operates within purine metabolism; GMP biosynthesis; GMP from XMP (L-Gln route): step 1/1. Its function is as follows. Catalyzes the synthesis of GMP from XMP. In Pseudomonas putida (strain GB-1), this protein is GMP synthase [glutamine-hydrolyzing].